Here is a 280-residue protein sequence, read N- to C-terminus: Vitamin B12-binding protein (280 aa).

The first 27 residues, 1 to 27 (MMPLGLFPLPRAAVVLLISLLTLPAQA), serve as a signal peptide directing secretion. A Fe/B12 periplasmic-binding domain is found at 30-277 (RVISLSPSTT…QMASIPTPVA (248 aa)). Cyanocob(III)alamin is bound at residue tyrosine 57. The cysteines at positions 190 and 266 are disulfide-linked.

It belongs to the BtuF family. The complex is composed of two ATP-binding proteins (BtuD), two transmembrane proteins (BtuC) and a solute-binding protein (BtuF).

The protein resides in the periplasm. Its function is as follows. Part of the ABC transporter complex BtuCDF involved in vitamin B12 import. Binds vitamin B12 and delivers it to the periplasmic surface of BtuC. The protein is Vitamin B12-binding protein of Yersinia pseudotuberculosis serotype O:1b (strain IP 31758).